A 593-amino-acid chain; its full sequence is MDRMTEDALRLNLLKRSLDPADERDDVLAKRLKMEGHEAMERLKMLALLKRKDLANLEVPHELPTKQDGSGVKGYEEKLNGNLRPHGDNRTAGRPGKENINDEPVDMSARRSEPERGRLTPSPDIIVLSDNEASSPRSSSRMEERLKAANLEMFKGKGIEERQQLIKQLRDELRLEEARLVLLKKLRQSQLQKENVVQKTPVVQNAASIVQPSPAHVGQQGLSKLPSRPGAQGVEPQNLRTLQGHSVIRSATNTTLPHMLMSQRVIAPNPAQLQGQRGPPKPGLVRTTTPNMNPAINYQPQSSSSVPCQRTTSSAIYMNLASHIQPGTVNRVSSPLPSPSAMTDAANSQAAAKLALRKQLEKTLLEIPPPKPPAPLLHFLPSAANSEFIYMVGLEEVVQSVIDSQGKSCASLLRVEPFVCAQCRTDFTPHWKQEKNGKILCEQCMTSNQKKALKAEHTNRLKNAFVKALQQEQEIEQRLQQQAALSPTTAPAVSSVSKQETIMRHHTLRQAPQPQSSLQRGIPTSARSMLSNFAQAPQLSVPGGLLGMPGVNIAYLNTGIGGHKGPSLADRQREYLLDMIPPRSISQSISGQK.

The residue at position 17 (Ser-17) is a Phosphoserine. Residues Lys-33, Lys-66, and Lys-97 each participate in a glycyl lysine isopeptide (Lys-Gly) (interchain with G-Cter in SUMO2) cross-link. The segment at 62-123 is disordered; sequence ELPTKQDGSG…PERGRLTPSP (62 aa). 2 stretches are compositionally biased toward basic and acidic residues: residues 74 to 100 and 108 to 118; these read GYEE…KENI and SARRSEPERGR. Thr-120 is modified (phosphothreonine). Residues Ser-122, Ser-129, Ser-134, and Ser-135 each carry the phosphoserine modification. Residues 140–194 adopt a coiled-coil conformation; the sequence is SRMEERLKAANLEMFKGKGIEERQQLIKQLRDELRLEEARLVLLKKLRQSQLQKE. Lys-147 is covalently cross-linked (Glycyl lysine isopeptide (Lys-Gly) (interchain with G-Cter in SUMO2)). The CR1; interaction with MBD2 and MBD3 stretch occupies residues 165 to 195; the sequence is LIKQLRDELRLEEARLVLLKKLRQSQLQKEN. Lys-199 participates in a covalent cross-link: Glycyl lysine isopeptide (Lys-Gly) (interchain with G-Cter in SUMO2). Residue Ser-208 is modified to Phosphoserine. The disordered stretch occupies residues 213-235; sequence SPAHVGQQGLSKLPSRPGAQGVE. Residue Lys-281 forms a Glycyl lysine isopeptide (Lys-Gly) (interchain with G-Cter in SUMO2) linkage. 3 positions are modified to phosphoserine: Ser-333, Ser-338, and Ser-340. The interval 340 to 480 is CR2; histone tail-binding; the sequence is SAMTDAANSQ…QEQEIEQRLQ (141 aa). Residues Lys-353, Lys-454, and Lys-467 each participate in a glycyl lysine isopeptide (Lys-Gly) (interchain with G-Cter in SUMO2) cross-link. Residues 414-467 form a GATA-type zinc finger; that stretch reads RVEPFVCAQCRTDFTPHWKQEKNGKILCEQCMTSNQKKALKAEHTNRLKNAFVK. Positions 449-482 form a coiled coil; the sequence is QKKALKAEHTNRLKNAFVKALQQEQEIEQRLQQQ. A Phosphoserine modification is found at Ser-486. Lys-498 participates in a covalent cross-link: Glycyl lysine isopeptide (Lys-Gly) (interchain with G-Cter in SUMO2).

As to quaternary structure, homooligomer. Component of the nucleosome remodeling and deacetylase (NuRD) repressor complex, composed of core proteins MTA1, MTA2, MTA3, RBBP4, RBBP7, HDAC1, HDAC2, MBD2, MBD3, and peripherally associated proteins CDK2AP1, CDK2AP2, GATAD2A, GATAD2B, CHD3, CHD4 and CHD5. The exact stoichiometry of the NuRD complex is unknown, and some subunits such as MBD2 and MBD3, GATAD2A and GATAD2B, and CHD3, CHD4 and CHD5 define mutually exclusive NuRD complexes. Interacts with MBD2; this is required for the enhancement of MBD2-mediated repression and for targeting to the chromatin. Interacts with MBD3. Component of the MeCP1 histone deacetylase complex. Interacts with histone tails, including that of histones H2A, H2B, H3 and H4. Interacts with ERCC6. In terms of tissue distribution, widely expressed.

The protein resides in the nucleus speckle. The protein localises to the nucleus. Its subcellular location is the chromosome. In terms of biological role, transcriptional repressor. Acts as a component of the histone deacetylase NuRD complex which participates in the remodeling of chromatin. Enhances MBD2-mediated repression. Efficient repression requires the presence of GATAD2A. Targets MBD3 to discrete loci in the nucleus. May play a role in synapse development. The polypeptide is Transcriptional repressor p66-beta (GATAD2B) (Homo sapiens (Human)).